We begin with the raw amino-acid sequence, 251 residues long: Imidazole glycerol phosphate synthase subunit HisF (251 aa).

Active-site residues include Asp11 and Asp130.

It belongs to the HisA/HisF family. In terms of assembly, heterodimer of HisH and HisF.

The protein localises to the cytoplasm. It carries out the reaction 5-[(5-phospho-1-deoxy-D-ribulos-1-ylimino)methylamino]-1-(5-phospho-beta-D-ribosyl)imidazole-4-carboxamide + L-glutamine = D-erythro-1-(imidazol-4-yl)glycerol 3-phosphate + 5-amino-1-(5-phospho-beta-D-ribosyl)imidazole-4-carboxamide + L-glutamate + H(+). It functions in the pathway amino-acid biosynthesis; L-histidine biosynthesis; L-histidine from 5-phospho-alpha-D-ribose 1-diphosphate: step 5/9. Its function is as follows. IGPS catalyzes the conversion of PRFAR and glutamine to IGP, AICAR and glutamate. The HisF subunit catalyzes the cyclization activity that produces IGP and AICAR from PRFAR using the ammonia provided by the HisH subunit. This is Imidazole glycerol phosphate synthase subunit HisF from Parabacteroides distasonis (strain ATCC 8503 / DSM 20701 / CIP 104284 / JCM 5825 / NCTC 11152).